A 1838-amino-acid chain; its full sequence is Collagen alpha-1(V) chain (1838 aa).

An N-terminal signal peptide occupies residues methionine 1 to alanine 37. One can recognise a Laminin G-like domain in the interval aspartate 72 to cysteine 244. A nonhelical region region spans residues arginine 231–glutamate 443. Residues tyrosine 234, tyrosine 236, tyrosine 240, tyrosine 262, and tyrosine 263 each carry the sulfotyrosine modification. Disordered regions lie at residues proline 242–glutamate 269, glutamate 281–glutamate 457, proline 470–leucine 520, phenylalanine 526–glutamine 545, and glycine 559–glutamine 1574. Acidic residues predominate over residues asparagine 258–glutamate 269. Positions aspartate 285 to threonine 304 are enriched in basic and acidic residues. Over residues glutamate 309–threonine 323 the composition is skewed to low complexity. 4 positions are modified to sulfotyrosine: tyrosine 338, tyrosine 340, tyrosine 346, and tyrosine 347. Positions proline 377–asparagine 388 are enriched in polar residues. The span at glycine 396–glutamate 406 shows a compositional bias: acidic residues. A sulfotyrosine mark is found at tyrosine 416, tyrosine 417, tyrosine 420, and tyrosine 421. Residues tyrosine 417–serine 428 show a composition bias toward low complexity. Residues glycine 444–arginine 558 are interrupted collagenous region. Residues proline 470–threonine 485 are compositionally biased toward pro residues. The segment covering leucine 506–leucine 520 has biased composition (low complexity). A triple-helical region region spans residues glycine 559 to glycine 1570. A hydroxyproline mark is found at proline 570 and proline 576. Residues aspartate 587–glutamine 597 show a composition bias toward low complexity. Proline 621 bears the Hydroxyproline mark. 5-hydroxylysine is present on lysine 627. Proline 639 is modified (hydroxyproline). The residue at position 642 (lysine 642) is a 5-hydroxylysine. Proline 648, proline 654, proline 657, proline 675, and proline 678 each carry hydroxyproline. A compositionally biased stretch (low complexity) spans proline 671–proline 686. A 5-hydroxylysine modification is found at lysine 687. The span at lysine 687–proline 696 shows a compositional bias: pro residues. A hydroxyproline mark is found at proline 690, proline 696, and proline 705. Lysine 708 bears the 5-hydroxylysine mark. Hydroxyproline occurs at positions 717, 720, 726, and 732. A compositionally biased stretch (low complexity) spans glutamine 722–proline 741. A 5-hydroxylysine modification is found at lysine 744. Positions leucine 747–proline 756 are enriched in low complexity. Hydroxyproline occurs at positions 750, 756, 762, 765, and 771. Lysine 774 bears the 5-hydroxylysine mark. Proline 780 and proline 789 each carry hydroxyproline. Lysine 795, lysine 804, lysine 807, and lysine 810 each carry 5-hydroxylysine. Proline 816 is modified (hydroxyproline). Position 819 is a 5-hydroxylysine (lysine 819). Hydroxyproline is present on proline 834. Over residues arginine 837 to lysine 846 the composition is skewed to basic and acidic residues. Lysine 846 carries the post-translational modification 5-hydroxylysine. Proline 861 carries the post-translational modification Hydroxyproline. At lysine 864 the chain carries 5-hydroxylysine. The segment covering leucine 867–proline 876 has biased composition (low complexity). Residues proline 870, proline 873, and proline 876 each carry the hydroxyproline modification. Residue lysine 882 is modified to 5-hydroxylysine. 2 positions are modified to hydroxyproline: proline 888 and proline 891. Lysine 897 is subject to 5-hydroxylysine. Hydroxyproline occurs at positions 903 and 906. Low complexity predominate over residues proline 908–proline 917. Hydroxyproline is present on residues proline 930 and proline 945. 2 stretches are compositionally biased toward low complexity: residues lysine 971 to threonine 990 and valine 999 to methionine 1011. Residues proline 1017, proline 1020, proline 1023, and proline 1029 each carry the hydroxyproline modification. Low complexity predominate over residues serine 1088–proline 1104. The span at arginine 1106–proline 1115 shows a compositional bias: pro residues. The segment covering alanine 1116–valine 1140 has biased composition (low complexity). Residues proline 1221 and proline 1224 each carry the hydroxyproline modification. Residues proline 1259–proline 1268 show a composition bias toward low complexity. Composition is skewed to pro residues over residues threonine 1380–alanine 1398 and serine 1454–leucine 1469. A hydroxyproline mark is found at proline 1467 and proline 1470. The segment covering proline 1485–proline 1494 has biased composition (low complexity). Over residues proline 1526–proline 1541 the composition is skewed to pro residues. Residues lysine 1542 to lysine 1554 show a composition bias toward low complexity. Over residues proline 1560 to proline 1569 the composition is skewed to pro residues. A nonhelical region region spans residues glutamate 1571 to alanine 1605. Sulfotyrosine occurs at positions 1601 and 1604. Residues aspartate 1606–glycine 1838 constitute a propeptide, C-terminal propeptide. One can recognise a Fibrillar collagen NC1 domain in the interval glutamate 1609–methionine 1837. Cystine bridges form between cysteine 1639–cysteine 1671, cysteine 1680–cysteine 1835, and cysteine 1746–cysteine 1789. Ca(2+) contacts are provided by aspartate 1657, asparagine 1659, glutamine 1660, cysteine 1662, and aspartate 1665.

This sequence belongs to the fibrillar collagen family. Trimers of two alpha 1(V) and one alpha 2(V) chains in most tissues and trimers of one alpha 1(V), one alpha 2(V), and one alpha 3(V) chains in placenta. Interacts with CSPG4. Prolines at the third position of the tripeptide repeating unit (G-X-Y) are hydroxylated in some or all of the chains. Post-translationally, sulfated on 40% of tyrosines.

The protein resides in the secreted. It localises to the extracellular space. Its subcellular location is the extracellular matrix. In terms of biological role, type V collagen is a member of group I collagen (fibrillar forming collagen). It is a minor connective tissue component of nearly ubiquitous distribution. Type V collagen binds to DNA, heparan sulfate, thrombospondin, heparin, and insulin. The polypeptide is Collagen alpha-1(V) chain (COL5A1) (Homo sapiens (Human)).